A 231-amino-acid chain; its full sequence is Phosphoglycolate phosphatase, plasmid (231 aa).

The active-site Nucleophile is the D14. Residues D14, D16, and D175 each contribute to the Mg(2+) site.

Belongs to the HAD-like hydrolase superfamily. CbbY/CbbZ/Gph/YieH family. In terms of assembly, homotrimer. Requires Mg(2+) as cofactor.

It carries out the reaction 2-phosphoglycolate + H2O = glycolate + phosphate. The protein operates within organic acid metabolism; glycolate biosynthesis; glycolate from 2-phosphoglycolate: step 1/1. Its function is as follows. Specifically catalyzes the dephosphorylation of 2-phosphoglycolate. Is involved in the dissimilation of the intracellular 2-phosphoglycolate formed during the DNA repair of 3'-phosphoglycolate ends, a major class of DNA lesions induced by oxidative stress. In Cupriavidus necator (strain ATCC 17699 / DSM 428 / KCTC 22496 / NCIMB 10442 / H16 / Stanier 337) (Ralstonia eutropha), this protein is Phosphoglycolate phosphatase, plasmid (cbbZP).